A 198-amino-acid polypeptide reads, in one-letter code: 7-methyl-GTP pyrophosphatase (198 aa).

The Proton acceptor role is filled by Asp-72.

It belongs to the Maf family. YceF subfamily. Requires a divalent metal cation as cofactor.

It is found in the cytoplasm. It catalyses the reaction N(7)-methyl-GTP + H2O = N(7)-methyl-GMP + diphosphate + H(+). Functionally, nucleoside triphosphate pyrophosphatase that hydrolyzes 7-methyl-GTP (m(7)GTP). May have a dual role in cell division arrest and in preventing the incorporation of modified nucleotides into cellular nucleic acids. The sequence is that of 7-methyl-GTP pyrophosphatase from Idiomarina loihiensis (strain ATCC BAA-735 / DSM 15497 / L2-TR).